Consider the following 675-residue polypeptide: Protein PALS1 (675 aa).

Residues 1–78 (MTTSHMNGHV…RREEEGKKQE (78 aa)) form a disordered region. Residues 1–345 (MTTSHMNGHV…QQIKPPPAKE (345 aa)) form a required for the correct localization of PALS1 and PATJ at cell-cell contacts and the normal formation of tight junctions and adherens junctions region. Composition is skewed to basic and acidic residues over residues 10–36 (VTEE…REMA) and 54–78 (AQLE…KKQE). Ser-14 and Ser-25 each carry phosphoserine. Positions 21 to 140 (VDLASPEEHQ…LKHIQHTLVD (120 aa)) are interaction with PARD6B. Residues Ser-83 and Ser-84 each carry the phosphoserine modification. L27 domains follow at residues 120–177 (KILE…NKAS) and 179–235 (PFPL…MQLE). The segment at 181 to 243 (PLISNAQDLA…LEPFTDERVY (63 aa)) is interaction with LIN7C. Residues 256–336 (IVRIEKARDI…TLTFVLIPSQ (81 aa)) form the PDZ domain. The region spanning 345 to 417 (ETVIHVKAHF…PGKSFQQQRE (73 aa)) is the SH3 domain. The region spanning 479–660 (KRPIILIGPQ…AYQELLRLIN (182 aa)) is the Guanylate kinase-like domain. ATP is bound at residue 486-493 (GPQNCGQN).

The protein belongs to the MAGUK family. Heterodimer with MPP1. Forms a heterotrimeric complex composed of PALS1, LIN7B and PATJ; the N-terminal L27 domain of PALS1 interacts with the L27 domain of PATJ and the C-terminal L27 domain of PALS1 interacts with the L27 domain of LIN7B. Component of a complex composed of PALS1, CRB1 and MPP4. Component of a complex whose core is composed of ARHGAP17, AMOT, PALS1, PATJ and PARD3/PAR3. Component of a complex composed of PALS1, CRB1 and EPB41L5. Within the complex, interacts (via HOOK domain) with EPB41L5 (via FERM domain), and interacts with CRB1 (via intracellular domain). Component of a complex composed of PALS1, MPP3 and CRB1; PALS1 acts as a bridging protein between MPP3 (via guanylate kinase-like domain) and CRB1. Component of a complex composed of CRB3, PALS1 and PATJ. As part of the Crumbs complex; interacts with WWP1, the interaction is enhanced by AMOTL2 and facilitates WWP1 localization to the plasma membrane. The Crumbs complex promotes monoubiquitination of AMOTL2 by WWP1, which activates the Hippo signaling pathway. Interacts (via PDZ domain) with PATJ (via N-terminus). Interacts with EZR. Interacts (via PDZ domain) with CRB1 (via C-terminal ERLI motif). While the PDZ domain is sufficient for interaction with CRB1, the adjacent SH3 and guanylate kinase-like domains are likely to contribute to a high affinity interaction. Interacts with WWTR1/TAZ (via WW domain). Interacts with MPP7. Interacts (via PDZ domain) with CRB3 (via C-terminus). Interacts with LIN7C. Interacts with MPDZ. Interacts with PARD6B. Interacts with SC6A1. Interacts with CDH5; the interaction promotes PALS1 localization to cell junctions and is required for CDH5-mediated vascular lumen formation and endothelial cell. Interacts with NPHP1 (via coiled coil and SH3 domains). Interacts with NPHP4. Interacts with CRB2.

Its subcellular location is the golgi apparatus. It localises to the cell membrane. It is found in the endomembrane system. The protein localises to the cell junction. The protein resides in the tight junction. Its subcellular location is the adherens junction. It localises to the cell projection. It is found in the axon. The protein localises to the perikaryon. The protein resides in the apical cell membrane. Its function is as follows. Plays a role in tight junction biogenesis and in the establishment of cell polarity in epithelial cells. Also involved in adherens junction biogenesis by ensuring correct localization of the exocyst complex protein EXOC4/SEC8 which allows trafficking of adherens junction structural component CDH1 to the cell surface. Plays a role through its interaction with CDH5 in vascular lumen formation and endothelial membrane polarity. Required during embryonic and postnatal retinal development. Required for the maintenance of cerebellar progenitor cells in an undifferentiated proliferative state, preventing premature differentiation, and is required for cerebellar histogenesis, fissure formation, cerebellar layer organization and cortical development. Plays a role in neuronal progenitor cell survival, potentially via promotion of mTOR signaling. Plays a role in the radial and longitudinal extension of the myelin sheath in Schwann cells. May modulate SC6A1/GAT1-mediated GABA uptake by stabilizing the transporter. May play a role in the T-cell receptor-mediated activation of NF-kappa-B. Required for localization of EZR to the apical membrane of parietal cells and may play a role in the dynamic remodeling of the apical cytoskeleton. Required for the normal polarized localization of the vesicular marker STX4. Required for the correct trafficking of the myelin proteins PMP22 and MAG. Involved in promoting phosphorylation and cytoplasmic retention of transcriptional coactivators YAP1 and WWTR1/TAZ which leads to suppression of TGFB1-dependent transcription of target genes such as CCN2/CTGF, SERPINE1/PAI1, SNAI1/SNAIL1 and SMAD7. The chain is Protein PALS1 from Canis lupus familiaris (Dog).